Consider the following 421-residue polypeptide: 3-isopropylmalate dehydratase large subunit (421 aa).

Residues cysteine 300, cysteine 360, and cysteine 363 each coordinate [4Fe-4S] cluster.

This sequence belongs to the aconitase/IPM isomerase family. LeuC type 2 subfamily. Heterodimer of LeuC and LeuD. It depends on [4Fe-4S] cluster as a cofactor.

The catalysed reaction is (2R,3S)-3-isopropylmalate = (2S)-2-isopropylmalate. It participates in amino-acid biosynthesis; L-leucine biosynthesis; L-leucine from 3-methyl-2-oxobutanoate: step 2/4. Functionally, catalyzes the isomerization between 2-isopropylmalate and 3-isopropylmalate, via the formation of 2-isopropylmaleate. This Lachnoclostridium phytofermentans (strain ATCC 700394 / DSM 18823 / ISDg) (Clostridium phytofermentans) protein is 3-isopropylmalate dehydratase large subunit.